Consider the following 369-residue polypeptide: Flagellar P-ring protein 1 (369 aa).

The N-terminal stretch at 1-23 (MRKQSLVTLLMVLLSLVWLPASA) is a signal peptide.

It belongs to the FlgI family. As to quaternary structure, the basal body constitutes a major portion of the flagellar organelle and consists of four rings (L,P,S, and M) mounted on a central rod.

It localises to the periplasm. Its subcellular location is the bacterial flagellum basal body. In terms of biological role, assembles around the rod to form the L-ring and probably protects the motor/basal body from shearing forces during rotation. The sequence is that of Flagellar P-ring protein 1 from Yersinia pseudotuberculosis serotype I (strain IP32953).